Consider the following 371-residue polypeptide: O-phospho-L-seryl-tRNA:Cys-tRNA synthase 1 (371 aa).

Residues Ala78 to Arg79, Asn183, and Ser206 to His208 contribute to the pyridoxal 5'-phosphate site. At Lys209 the chain carries N6-(pyridoxal phosphate)lysine.

It belongs to the SepCysS family. In terms of assembly, homodimer. Probably interacts with SepRS. It depends on pyridoxal 5'-phosphate as a cofactor.

The catalysed reaction is O-phospho-L-seryl-tRNA(Cys) + hydrogen sulfide + H(+) = L-cysteinyl-tRNA(Cys) + phosphate. Converts O-phospho-L-seryl-tRNA(Cys) (Sep-tRNA(Cys)) to L-cysteinyl-tRNA(Cys) (Cys-tRNA(Cys)). The polypeptide is O-phospho-L-seryl-tRNA:Cys-tRNA synthase 1 (Archaeoglobus fulgidus (strain ATCC 49558 / DSM 4304 / JCM 9628 / NBRC 100126 / VC-16)).